The sequence spans 385 residues: Aryl-alcohol dehydrogenase [NADP(+)] (385 aa).

The Proton donor role is filled by Tyr-76. 238–248 (NVLCAGKIRTD) provides a ligand contact to NADP(+).

The protein belongs to the aldo/keto reductase family. Aldo/keto reductase 2 subfamily. The N-terminus is blocked.

The enzyme catalyses an aromatic primary alcohol + NADP(+) = an aromatic aldehyde + NADPH + H(+). In Phanerodontia chrysosporium (White-rot fungus), this protein is Aryl-alcohol dehydrogenase [NADP(+)].